The chain runs to 594 residues: Lysine--tRNA ligase cla4 (594 aa).

Residues 1 to 62 (MADPGAVKET…KETSSEQDEA (62 aa)) form a disordered region. Over residues 18–42 (TGEKVSKTELKKRLKSRAKEAEKQK) the composition is skewed to basic and acidic residues.

Belongs to the class-II aminoacyl-tRNA synthetase family. Homodimer.

It catalyses the reaction tRNA(Lys) + L-lysine + ATP = L-lysyl-tRNA(Lys) + AMP + diphosphate. Involved in self-resistance to cladosporin since this product is an inhibitor of lysyl-tRNA synthetase. Cla4 may not be inhibited by cladosporin, thereby imparting cladosporin resistance. When cladosporin biosynthesis is switched on, transcription of cla4 will then be necessary for continued protein synthesis in C.cladosporioides. This Cladosporium cladosporioides protein is Lysine--tRNA ligase cla4.